Consider the following 231-residue polypeptide: Large ribosomal subunit protein uL1 (231 aa).

Belongs to the universal ribosomal protein uL1 family. In terms of assembly, part of the 50S ribosomal subunit.

Its function is as follows. Binds directly to 23S rRNA. The L1 stalk is quite mobile in the ribosome, and is involved in E site tRNA release. Functionally, protein L1 is also a translational repressor protein, it controls the translation of the L11 operon by binding to its mRNA. In Pseudomonas fluorescens (strain ATCC BAA-477 / NRRL B-23932 / Pf-5), this protein is Large ribosomal subunit protein uL1.